The primary structure comprises 176 residues: Dual specificity phosphatase 28 (176 aa).

A Tyrosine-protein phosphatase domain is found at 17–159; that stretch reads PPLVRVAPSL…LQKYEEALQA (143 aa). Cys-103 acts as the Phosphocysteine intermediate in catalysis.

It belongs to the protein-tyrosine phosphatase family. Non-receptor class dual specificity subfamily. As to quaternary structure, monomer.

The catalysed reaction is O-phospho-L-tyrosyl-[protein] + H2O = L-tyrosyl-[protein] + phosphate. It catalyses the reaction O-phospho-L-seryl-[protein] + H2O = L-seryl-[protein] + phosphate. It carries out the reaction O-phospho-L-threonyl-[protein] + H2O = L-threonyl-[protein] + phosphate. Its function is as follows. Has phosphatase activity with the synthetic substrate 6,8-difluoro-4-methylumbelliferyl phosphate (in vitro). Has almost no detectable activity with phosphotyrosine, even less activity with phosphothreonine and displays complete lack of activity with phosphoserine. The poor activity with phosphotyrosine may be due to steric hindrance by bulky amino acid sidechains that obstruct access to the active site. The polypeptide is Dual specificity phosphatase 28 (DUSP28) (Homo sapiens (Human)).